The chain runs to 930 residues: GPI ethanolamine phosphate transferase 1 (930 aa).

Residues 1 to 8 (MARLGRTG) are Cytoplasmic-facing. A helical membrane pass occupies residues 9–29 (FLTLAVVFHLIYAYSIFDIYF). The Lumenal portion of the chain corresponds to 30–466 (VSPIVSGMRP…LQTYDWLFLR (437 aa)). The N-linked (GlcNAc...) asparagine glycan is linked to Asn-148. Residues 467–487 (TIVTFGYVGWIAYALTTVIHL) form a helical membrane-spanning segment. The Cytoplasmic segment spans residues 488–498 (HVLHGASESDR). A helical transmembrane segment spans residues 499–519 (TTASISFFSSVLVALFSVFLY). Topologically, residues 520-521 (QG) are lumenal. A helical transmembrane segment spans residues 522–542 (SPWRYYLYGFFPIFFWEEVFA). Topologically, residues 543-569 (RRKAFHAGRAGALLLPKRDLHSNKVED) are cytoplasmic. A helical membrane pass occupies residues 570–590 (IDTITYGGAFMLLTGLLYLLF). Residues 591–611 (EDEILGTSHQPAAVSRKGSRN) lie on the Lumenal side of the membrane. A helical membrane pass occupies residues 612–632 (IMGLQLGMVLLALIVTRSSAA). Residues 633 to 639 (SLQAKQG) are Cytoplasmic-facing. A helical membrane pass occupies residues 640–660 (LPFGNQVVGWGVLIASLLLPF). Residues 661–684 (AHRLYPNSHYLHRLMIIFLTFSPT) are Lumenal-facing. A helical membrane pass occupies residues 685 to 705 (FIILTISYEGLFYFAFCMTLV). Residues 706-761 (TWVRLEHATYVYTAKPVAKQAQETIEPPKKANPGATTVVDGETYRFRTLTVSDARV) lie on the Cytoplasmic side of the membrane. A helical transmembrane segment spans residues 762–782 (ALFFFFLLQSAFFSTGNIASI). The Lumenal portion of the chain corresponds to 783–803 (SSFSLDSVYRLIPVFNPFSQG). A helical membrane pass occupies residues 804–824 (ALLILKLLIPFAIISANLGIL). The Cytoplasmic segment spans residues 825-833 (NRRLEVAPS). Residues 834–854 (ALFMVVMAISDVMTLNFFYMV) form a helical membrane-spanning segment. The Lumenal segment spans residues 855–870 (RDEGSWLDIGTTISHF). Residues 871–891 (CIASFLCTFVAGLEFLSEVFI) traverse the membrane as a helical segment. At 892–930 (SGVDFGLRTDAITASVPDIVNGITSKGQKDVPNGVEDKE) the chain is on the cytoplasmic side.

Belongs to the PIGG/PIGN/PIGO family. PIGN subfamily.

The protein resides in the endoplasmic reticulum membrane. The protein operates within glycolipid biosynthesis; glycosylphosphatidylinositol-anchor biosynthesis. Ethanolamine phosphate transferase involved in glycosylphosphatidylinositol-anchor biosynthesis. Transfers ethanolamine phosphate to the first alpha-1,4-linked mannose of the glycosylphosphatidylinositol precursor of GPI-anchor. The protein is GPI ethanolamine phosphate transferase 1 (mcd4) of Emericella nidulans (strain FGSC A4 / ATCC 38163 / CBS 112.46 / NRRL 194 / M139) (Aspergillus nidulans).